The sequence spans 122 residues: EVKLVESGGGLVQPGGSLRLSCATSGFTFSDFYMEWVRQPPGKRLEWIAASRNKGNKYTTEYSASVKGRFIVSRDTSQSILYLQMNALRAEDTAIYYCARNYYGSTWYFDVWGAGTTVTVSS.

One can recognise an Ig-like domain in the interval 1–121 (EVKLVESGGG…WGAGTTVTVS (121 aa)).

The chain is Ig heavy chain V region M603 from Mus musculus (Mouse).